The following is a 376-amino-acid chain: Heptahelical transmembrane protein ADIPOR1 (376 aa).

The Cytoplasmic portion of the chain corresponds to Met1 to Thr90. The tract at residues Pro20–Lys46 is disordered. The helical transmembrane segment at Ile91–Leu111 threads the bilayer. Over Gly112 to Pro179 the chain is Extracellular. A helical transmembrane segment spans residues Phe180 to Leu200. The Cytoplasmic portion of the chain corresponds to Ser201 to Tyr216. A helical membrane pass occupies residues Thr217–Cys237. The Extracellular segment spans residues Glu238 to Arg240. A helical membrane pass occupies residues Trp241–Met261. Residues Ser262–Arg274 lie on the Cytoplasmic side of the membrane. Residues Ala275–Val295 form a helical membrane-spanning segment. Topologically, residues Asn296 to Asn303 are extracellular. The helical transmembrane segment at Val304–Leu324 threads the bilayer. At Thr325 to Gln344 the chain is on the cytoplasmic side. Residues Ile345 to Ile365 traverse the membrane as a helical segment. Topologically, residues Gln366–Pro376 are extracellular.

The protein belongs to the ADIPOR family.

It is found in the membrane. In terms of biological role, may play a role in abiotic stress response. The protein is Heptahelical transmembrane protein ADIPOR1 (ADIPOR1) of Oryza sativa subsp. japonica (Rice).